A 44-amino-acid polypeptide reads, in one-letter code: Large ribosomal subunit protein bL34 (44 aa).

Composition is skewed to basic residues over residues 1-14 and 31-44; these read MKRT…KRQK and LSAR…RLAV. The interval 1-44 is disordered; sequence MKRTLGGTTRKRQKTSGFRARMRTASGRRVLSARRRRGRHRLAV.

Belongs to the bacterial ribosomal protein bL34 family.

This Gloeobacter violaceus (strain ATCC 29082 / PCC 7421) protein is Large ribosomal subunit protein bL34.